We begin with the raw amino-acid sequence, 237 residues long: Probable transcriptional regulatory protein EAT1b_0153 (237 aa).

This sequence belongs to the TACO1 family. YeeN subfamily.

The protein resides in the cytoplasm. The polypeptide is Probable transcriptional regulatory protein EAT1b_0153 (Exiguobacterium sp. (strain ATCC BAA-1283 / AT1b)).